The following is a 415-amino-acid chain: Polyadenylate-binding protein RBP45C (415 aa).

Positions 1–77 (MMQQPPPASN…GGSQNPGSAG (77 aa)) are disordered. Residues 23–64 (QQAYLQQQQSWMMQHQQQQQGQPPAGWNQQSAPSSGQPQQQQ) show a composition bias toward low complexity. RRM domains lie at 80-160 (RSLW…WAQL), 173-252 (HTVF…PAAN), and 278-350 (TTIF…WGRS). The segment covering 344–356 (RLSWGRSPSNKQT) has biased composition (polar residues). Positions 344 to 369 (RLSWGRSPSNKQTQPDQAQYGGGGGY) are disordered.

This sequence belongs to the polyadenylate-binding RBP45 family. In terms of assembly, interacts with the poly(A) tail of mRNA in nucleus. As to expression, mostly expressed in seedlings and stems, and, to a lower extent, in leaves and flowers.

The protein localises to the nucleus. Heterogeneous nuclear ribonucleoprotein (hnRNP)-protein binding the poly(A) tail of mRNA and probably involved in some steps of pre-mRNA maturation. The protein is Polyadenylate-binding protein RBP45C (RBP45C) of Arabidopsis thaliana (Mouse-ear cress).